The primary structure comprises 358 residues: Popeye domain-containing protein 1 (358 aa).

At 1-48 (MNSTESIPLAQSTVAGFTSELESLTPVPSNETTCENWREIHHLVFHVA) the chain is on the extracellular side. 2 N-linked (GlcNAc...) asparagine glycosylation sites follow: asparagine 2 and asparagine 30. The helical transmembrane segment at 49-69 (NVCFAVGLLIPTTLHLHMILL) threads the bilayer. Residue arginine 70 is a topological domain, cytoplasmic. Residues 71-91 (VMLSLGCTLYVVWATLYRCAL) traverse the membrane as a helical segment. A topological domain (extracellular) is located at residue aspartate 92. The chain crosses the membrane as a helical span at residues 93–113 (VMIWNSVFLGINILHLSYLLY). The interval 93–115 (VMIWNSVFLGINILHLSYLLYKK) is required for interaction with CAV3. Topologically, residues 114-358 (KKRPVKIEKE…PDALKVHQLP (245 aa)) are cytoplasmic. Residues 136 to 186 (RVPPDLFRRLTGQFCMIQTLKRGQVYATEDKTSVDDRLSILLKGRMKVSYR) form a required for interaction with KCNK2 region. A phosphoserine mark is found at serine 295 and serine 318. Low complexity predominate over residues 313 to 323 (SSSTASLPMSS). Residues 313-350 (SSSTASLPMSSPQQRASAKMKPIEEGVEDDDEVFVSPD) form a disordered region.

The protein belongs to the popeye family. Homodimer. Homodimerization requires the C-terminus cytoplasmic region. Interacts (via the C-terminus cytoplasmic tail) with TJP1. Interacts (via the C-terminus cytoplasmic tail) with ARHGEF25/GEFT (via the DH domain). Interacts (via the C-terminus cytoplasmic tail) with VAMP3. Interacts with KCNK2; the interaction enhances KCNK2 surface expression and is inhibited by cAMP. Interacts with CAV3. As to expression, expressed in epithelial cells, skeletal muscle, heart and intestinal smooth muscle (at protein level). Expressed in fetal and adult heart and skeletal muscle.

It localises to the lateral cell membrane. The protein resides in the cell junction. Its subcellular location is the tight junction. The protein localises to the membrane. It is found in the cell membrane. It localises to the sarcolemma. The protein resides in the caveola. Its function is as follows. Cell adhesion molecule involved in the establishment and/or maintenance of cell integrity. Involved in the formation and regulation of the tight junction (TJ) paracellular permeability barrier in epithelial cells. Plays a role in VAMP3-mediated vesicular transport and recycling of different receptor molecules through its interaction with VAMP3. Plays a role in the regulation of cell shape and movement by modulating the Rho-family GTPase activity through its interaction with ARHGEF25/GEFT. Induces primordial adhesive contact and aggregation of epithelial cells in a Ca(2+)-independent manner. Also involved in striated muscle regeneration and repair and in the regulation of cell spreading. Important for the maintenance of cardiac function. Plays a regulatory function in heart rate dynamics mediated, at least in part, through cAMP-binding and, probably, by increasing cell surface expression of the potassium channel KCNK2 and enhancing current density. Is a caveolae-associated protein important for the preservation of caveolae structural and functional integrity as well as for heart protection against ischemia injury. The chain is Popeye domain-containing protein 1 from Mus musculus (Mouse).